The chain runs to 38 residues: Cytochrome b6-f complex subunit 5 (38 aa).

The helical transmembrane segment at Leu5–Ala25 threads the bilayer.

Belongs to the PetG family. In terms of assembly, the 4 large subunits of the cytochrome b6-f complex are cytochrome b6, subunit IV (17 kDa polypeptide, PetD), cytochrome f and the Rieske protein, while the 4 small subunits are PetG, PetL, PetM and PetN. The complex functions as a dimer.

The protein resides in the plastid. It localises to the chloroplast thylakoid membrane. Its function is as follows. Component of the cytochrome b6-f complex, which mediates electron transfer between photosystem II (PSII) and photosystem I (PSI), cyclic electron flow around PSI, and state transitions. PetG is required for either the stability or assembly of the cytochrome b6-f complex. In Huperzia lucidula (Shining clubmoss), this protein is Cytochrome b6-f complex subunit 5.